A 690-amino-acid chain; its full sequence is Glycine--tRNA ligase beta subunit (690 aa).

This sequence belongs to the class-II aminoacyl-tRNA synthetase family. Tetramer of two alpha and two beta subunits.

It localises to the cytoplasm. The catalysed reaction is tRNA(Gly) + glycine + ATP = glycyl-tRNA(Gly) + AMP + diphosphate. The protein is Glycine--tRNA ligase beta subunit of Tolumonas auensis (strain DSM 9187 / NBRC 110442 / TA 4).